A 505-amino-acid polypeptide reads, in one-letter code: Cytochrome P450 4Z1 (505 aa).

At 1-9 (MEPSWLQEL) the chain is on the cytoplasmic side. Residues 10–30 (MAHPFLLLILLCMSLLLFQVI) form a helical; Signal-anchor for type II membrane protein membrane-spanning segment. Over 31–505 (RLYQRRRWMI…GIHVFAKKVC (475 aa)) the chain is Lumenal. Residue Cys452 coordinates heme.

Belongs to the cytochrome P450 family. Heme serves as cofactor. As to expression, preferentially detected in breast carcinoma tissue and mammary gland, whereas only marginal expression is found in all other tested tissues.

Its subcellular location is the endoplasmic reticulum membrane. It localises to the microsome membrane. The enzyme catalyses an organic molecule + reduced [NADPH--hemoprotein reductase] + O2 = an alcohol + oxidized [NADPH--hemoprotein reductase] + H2O + H(+). It catalyses the reaction dodecanoate + reduced [NADPH--hemoprotein reductase] + O2 = 7-hydroxydodecanoate + oxidized [NADPH--hemoprotein reductase] + H2O + H(+). The catalysed reaction is dodecanoate + reduced [NADPH--hemoprotein reductase] + O2 = 8-hydroxydodecanoate + oxidized [NADPH--hemoprotein reductase] + H2O + H(+). It carries out the reaction dodecanoate + reduced [NADPH--hemoprotein reductase] + O2 = 9-hydroxydodecanoate + oxidized [NADPH--hemoprotein reductase] + H2O + H(+). The enzyme catalyses dodecanoate + reduced [NADPH--hemoprotein reductase] + O2 = 10-hydroxydodecanoate + oxidized [NADPH--hemoprotein reductase] + H2O + H(+). It catalyses the reaction dodecanoate + reduced [NADPH--hemoprotein reductase] + O2 = 11-hydroxydodecanoate + oxidized [NADPH--hemoprotein reductase] + H2O + H(+). The catalysed reaction is tetradecanoate + reduced [NADPH--hemoprotein reductase] + O2 = 9-hydroxytetradecanoate + oxidized [NADPH--hemoprotein reductase] + H2O + H(+). It carries out the reaction tetradecanoate + reduced [NADPH--hemoprotein reductase] + O2 = 10-hydroxytetradecanoate + oxidized [NADPH--hemoprotein reductase] + H2O + H(+). The enzyme catalyses tetradecanoate + reduced [NADPH--hemoprotein reductase] + O2 = 11-hydroxytetradecanoate + oxidized [NADPH--hemoprotein reductase] + H2O + H(+). It catalyses the reaction tetradecanoate + reduced [NADPH--hemoprotein reductase] + O2 = 12-hydroxytetradecanoate + oxidized [NADPH--hemoprotein reductase] + H2O + H(+). The catalysed reaction is (5Z,8Z,11Z,14Z)-eicosatetraenoate + reduced [NADPH--hemoprotein reductase] + O2 = (14S,15R)-epoxy-(5Z,8Z,11Z)-eicosatrienoate + oxidized [NADPH--hemoprotein reductase] + H2O + H(+). Functionally, a cytochrome P450 monooxygenase that catalyzes the in-chain oxidation of fatty acids. Catalyzes the hydroxylation of carbon-hydrogen bonds. Hydroxylates lauric and myristic acids predominantly at the omega-4 and omega-2 positions, respectively. Catalyzes the epoxidation of double bonds of polyunsaturated fatty acids (PUFA). Displays an absolute stereoselectivity in the epoxidation of arachidonic acid producing the 14(S),15(R)-epoxyeicosatrienoic acid (EET) enantiomer. Mechanistically, uses molecular oxygen inserting one oxygen atom into a substrate, and reducing the second into a water molecule, with two electrons provided by NADPH via cytochrome P450 reductase (CPR; NADPH-ferrihemoprotein reductase). In Homo sapiens (Human), this protein is Cytochrome P450 4Z1.